Reading from the N-terminus, the 172-residue chain is MLPMITGFMNYGQQTLRAARYIGQGFMITLSHTNRLPVTIQYPYEKLITSERFRGRIHFEFDKCIACEVCVRVCPIDLPVVDWKLETNIRKKRLLNYSIDFGICIFCGNCVEYCPTNCLSMTEEYEFSTYDRHELNYNQIALGRLPMSVIDDYTIRTILNSPQTKNGENPLI.

2 consecutive 4Fe-4S ferredoxin-type domains span residues 55-84 (GRIH…VDWK) and 95-124 (LNYS…MTEE). Residues C64, C67, C70, C74, C104, C107, C110, and C114 each coordinate [4Fe-4S] cluster.

The protein belongs to the complex I 23 kDa subunit family. As to quaternary structure, NDH is composed of at least 16 different subunits, 5 of which are encoded in the nucleus. It depends on [4Fe-4S] cluster as a cofactor.

Its subcellular location is the plastid. It is found in the chloroplast thylakoid membrane. It catalyses the reaction a plastoquinone + NADH + (n+1) H(+)(in) = a plastoquinol + NAD(+) + n H(+)(out). It carries out the reaction a plastoquinone + NADPH + (n+1) H(+)(in) = a plastoquinol + NADP(+) + n H(+)(out). Its function is as follows. NDH shuttles electrons from NAD(P)H:plastoquinone, via FMN and iron-sulfur (Fe-S) centers, to quinones in the photosynthetic chain and possibly in a chloroplast respiratory chain. The immediate electron acceptor for the enzyme in this species is believed to be plastoquinone. Couples the redox reaction to proton translocation, and thus conserves the redox energy in a proton gradient. This chain is NAD(P)H-quinone oxidoreductase subunit I, chloroplastic, found in Crucihimalaya wallichii (Rock-cress).